The chain runs to 458 residues: Serine protease HTRA2, mitochondrial (458 aa).

A mitochondrion-targeting transit peptide spans 1-31; the sequence is MAALRAGRGAGWSLRGWRALWGGRWGKGPLL. The propeptide occupies 32–133; that stretch reads TPDLRALLTS…GGRGPPAVLA (102 aa). Residues 105-125 form a helical membrane-spanning segment; it reads VWLAVALGAGGAVLLLFWGGG. The IAP-binding motif signature appears at 134–137; it reads SVLG. A serine protease region spans residues 166 to 342; that stretch reads ILGRHPFSGR…IPSDRLREFL (177 aa). Catalysis depends on charge relay system residues His-198, Asp-228, and Ser-306. Residues 364 to 445 form the PDZ domain; it reads VMMLTLTPSI…QLAVRIRRGQ (82 aa).

Belongs to the peptidase S1C family. In terms of assembly, homotrimer. Interacts with MXI2. Interacts with THAP5 under apoptotic conditions. The mature protein, but not the precursor, binds to BIRC2/c-IAP1, BIRC3/c-IAP2 and XIAP/BIRC4. Interacts with BIRC6/bruce. Interacts with AREL1 (via HECT domain); in the cytoplasm following induction of apoptosis. Ubiquitinated by BIRC6; this activity is inhibited by DIABLO/SMAC. Post-translationally, autoproteolytically activated.

It is found in the mitochondrion intermembrane space. The protein resides in the mitochondrion membrane. It carries out the reaction Cleavage of non-polar aliphatic amino-acids at the P1 position, with a preference for Val, Ile and Met. At the P2 and P3 positions, Arg is selected most strongly with a secondary preference for other hydrophilic residues.. With respect to regulation, inhibited by BIRC6. Functionally, serine protease that shows proteolytic activity against a non-specific substrate beta-casein. Promotes apoptosis by either relieving the inhibition of BIRC proteins on caspases, leading to an increase in caspase activity; or by a BIRC inhibition-independent, caspase-independent and serine protease activity-dependent mechanism. Cleaves BIRC6 and relieves its inhibition on CASP3, CASP7 and CASP9, but it is also prone to inhibition by BIRC6. Cleaves THAP5 and promotes its degradation during apoptosis. The chain is Serine protease HTRA2, mitochondrial (HTRA2) from Bos taurus (Bovine).